A 32-amino-acid polypeptide reads, in one-letter code: Cruzioseptin-9 (32 aa).

A Glutamine amide modification is found at Gln29. A propeptide spanning residues 31 to 32 (EQ) is cleaved from the precursor.

Expressed by the skin glands.

It localises to the secreted. Has antimicrobial activity. In Cruziohyla calcarifer (Splendid leaf frog), this protein is Cruzioseptin-9.